Here is a 272-residue protein sequence, read N- to C-terminus: Ethanolamine ammonia-lyase small subunit (272 aa).

Residues Val161, Glu182, and Cys211 each coordinate adenosylcob(III)alamin.

Belongs to the EutC family. The basic unit is a heterodimer which dimerizes to form tetramers. The heterotetramers trimerize; 6 large subunits form a core ring with 6 small subunits projecting outwards. Requires adenosylcob(III)alamin as cofactor.

It is found in the bacterial microcompartment. It carries out the reaction ethanolamine = acetaldehyde + NH4(+). Its pathway is amine and polyamine degradation; ethanolamine degradation. Catalyzes the deamination of various vicinal amino-alcohols to oxo compounds. Allows this organism to utilize ethanolamine as the sole source of nitrogen and carbon in the presence of external vitamin B12. The chain is Ethanolamine ammonia-lyase small subunit from Xanthomonas campestris pv. campestris (strain ATCC 33913 / DSM 3586 / NCPPB 528 / LMG 568 / P 25).